The primary structure comprises 368 residues: Cyclic GMP-AMP synthase-like receptor (368 aa).

Residues Ser60 and 72 to 74 each bind ATP; that span reads EYD. Residues Glu72, Asp74, and Asp190 each coordinate Mg(2+). Residues Asp190 and 229–236 contribute to the GTP site; that span reads RASFYRQE. ATP-binding positions include 233–236, Lys254, and 268–272; these read YRQE and SYFIK.

Belongs to the mab-21 family. Mg(2+) serves as cofactor. It depends on Mn(2+) as a cofactor.

It carries out the reaction GTP + ATP = 3',2'-cGAMP + 2 diphosphate. The catalysed reaction is GTP + ATP = pppA(2'-5')pG + diphosphate. The enzyme catalyses pppA(2'-5')pG = 3',2'-cGAMP + diphosphate. Its activity is regulated as follows. The enzyme activity is specifically activated by double-stranded RNA (dsRNA). Functionally, nucleotidyltransferase that catalyzes the formation of cyclic GMP-AMP (3',2'-cGAMP) from ATP and GTP and plays a key role in innate immunity. Synthesizes 3',2'-cGAMP in a two-step reaction through production of the linear intermediate pppA(2'-5')pG. Acts as a key sensor of double-stranded RNA (dsRNA), the presence of dsRNA in the cytoplasm being a danger signal that triggers the immune responses. Directly binds dsRNA, activating the nucleotidyltransferase activity, leading to synthesis of 3',2'-cGAMP, a second messenger that binds to and activates Sting, thereby triggering the antiviral immune response via activation of the NF-kappa-B transcription factor Rel (Relish). The sequence is that of Cyclic GMP-AMP synthase-like receptor from Lucilia cuprina (Green bottle fly).